A 1478-amino-acid chain; its full sequence is ATP-binding cassette transporter abc2 (1478 aa).

At 1–25 (MVLEQDLDPFVGGNWMNSAYKGFTF) the chain is on the vacuolar side. The helical transmembrane segment at 26–46 (LSATWLAPNIYLLISGCLQYF) threads the bilayer. The Cytoplasmic portion of the chain corresponds to 47–65 (YEVRKRSHYFHFRRFWTIW). The chain crosses the membrane as a helical span at residues 66–85 (LKSLVIMVLLFTHIYDCYKT). A glycan (N-linked (GlcNAc...) asparagine) is linked at Asn86. Over 86–90 (NESVW) the chain is Vacuolar. Residues 91–104 (NVLSIITYFLALFL) traverse the membrane as a helical segment. Topologically, residues 105-116 (HVVEQPTLRIPM) are cytoplasmic. The helical transmembrane segment at 117–137 (ASLLMFWLFKFLASALVLLLR) threads the bilayer. The Vacuolar segment spans residues 138–154 (PNYTMFPMLNVVPSITF). An N-linked (GlcNAc...) asparagine glycan is attached at Asn139. The chain crosses the membrane as a helical span at residues 155-175 (FCSLVCLLAEIYVPPANRVWY). Over 176 to 259 (PDDAAELEET…KKSSLYMWGV (84 aa)) the chain is Cytoplasmic. A helical transmembrane segment spans residues 260–280 (LFLNHWKLTVVIIVLKLVQDV). The 290-residue stretch at 268–557 (TVVIIVLKLV…LPIVVSSVLE (290 aa)) folds into the ABC transmembrane type-1 1 domain. The Vacuolar portion of the chain corresponds to 281–310 (VAFIQPNLIRKIVIFVSSYSSEHPQPPQVG). A helical membrane pass occupies residues 311-331 (FSLAIAMFLTNVVQTALLQQY). The Cytoplasmic segment spans residues 332 to 387 (FQLGMVLGMRWRSELITAIYRKSLRLSSAARQSRSVGDIVNYMSVDTQKVCDLTMF). A helical membrane pass occupies residues 388-408 (LFVIVSGPFQIVLALTNLYHL). Topologically, residues 409–411 (VGY) are vacuolar. A helical membrane pass occupies residues 412–432 (GALSGAFVTFLLFPCNVVIAS). Residues 433–495 (IFKRFQNRQM…MLKKIGIVNT (63 aa)) are Cytoplasmic-facing. A helical transmembrane segment spans residues 496–516 (IGNFTWLFAPILVSAATFGTF). At 517-539 (IVLYGKTRVLSVDIVFACLSLFN) the chain is on the vacuolar side. Residues 540 to 560 (LLQFPLTMLPIVVSSVLEASV) form a helical membrane-spanning segment. At 561–910 (AISRIYGFLT…VKWKVYWTYF (350 aa)) the chain is on the cytoplasmic side. The ABC transporter 1 domain occupies 593-821 (LEIKKGTFSW…PDSQLFQLLS (229 aa)). 631-638 (GKVGMGKS) serves as a coordination point for ATP. The segment at 828 to 867 (TASSTGADTPLSRSQSVITSSTDVTSSASRSSDTVSNYPK) is disordered. Positions 829-840 (ASSTGADTPLSR) are enriched in polar residues. Phosphoserine occurs at positions 839, 843, and 863. Low complexity predominate over residues 841 to 863 (SQSVITSSTDVTSSASRSSDTVS). Residues 911 to 931 (KACSLFLIFLYFLFIIGGIGM) form a helical membrane-spanning segment. An ABC transmembrane type-1 2 domain is found at 918-1202 (IFLYFLFIIG…VVRQSVDVET (285 aa)). Residues 932 to 968 (NVGTNVWLKHWSEVNTQLGYNPKPYFYLGIYTLFGLL) are Vacuolar-facing. Residues 969–990 (SCALISLSSLTITVFCAIKSCR) traverse the membrane as a helical segment. Residues 991-1033 (YLHDSMVKAVLRAPMSFFETTPTGRILNRFSSDVYRVDEVISR) lie on the Cytoplasmic side of the membrane. A helical membrane pass occupies residues 1034-1054 (VFMFFFRNLFQIVFVLAVICY). Ser1055 is a topological domain (vacuolar). Residues 1056–1076 (SPMFMILIVPLFFLYRYNQVY) traverse the membrane as a helical segment. Residues 1077 to 1147 (YTQTSRELKR…SSNRWQAIRV (71 aa)) are Cytoplasmic-facing. Residues 1148-1168 (EAIGALVVFSSAFFGVLSAVR) form a helical membrane-spanning segment. Residues 1169–1172 (GNPN) are Vacuolar-facing. A helical membrane pass occupies residues 1173–1193 (SGLVGLSLSYAVQITQSLTFV). Residues 1194–1478 (VRQSVDVETN…YSLAKESGLI (285 aa)) lie on the Cytoplasmic side of the membrane. An ABC transporter 2 domain is found at 1239 to 1473 (IKFDHYSVRY…KASLFYSLAK (235 aa)). 1273–1280 (GRTGAGKS) contacts ATP.

The protein belongs to the ABC transporter superfamily. ABCC family. Conjugate transporter (TC 3.A.1.208) subfamily.

It localises to the vacuole membrane. Its function is as follows. Involved in vacuolar sequestration of glutathione S-conjugates. Together with abc4, required for accumulation of a red pigment (ade pigment) in the vacuole of a mutant affected in the adenine biosynthetic pathway. This is ATP-binding cassette transporter abc2 (abc2) from Schizosaccharomyces pombe (strain 972 / ATCC 24843) (Fission yeast).